A 405-amino-acid chain; its full sequence is Tryptophan synthase beta chain (405 aa).

Lysine 95 carries the N6-(pyridoxal phosphate)lysine modification.

This sequence belongs to the TrpB family. Tetramer of two alpha and two beta chains. Requires pyridoxal 5'-phosphate as cofactor.

The catalysed reaction is (1S,2R)-1-C-(indol-3-yl)glycerol 3-phosphate + L-serine = D-glyceraldehyde 3-phosphate + L-tryptophan + H2O. Its pathway is amino-acid biosynthesis; L-tryptophan biosynthesis; L-tryptophan from chorismate: step 5/5. In terms of biological role, the beta subunit is responsible for the synthesis of L-tryptophan from indole and L-serine. This Pseudomonas putida (strain ATCC 700007 / DSM 6899 / JCM 31910 / BCRC 17059 / LMG 24140 / F1) protein is Tryptophan synthase beta chain.